The following is a 33-amino-acid chain: Dermaseptin DS VIII-like peptide (33 aa).

Alanine 33 is modified (alanine amide).

As to expression, expressed by the parotoid glands.

The protein resides in the secreted. In terms of biological role, possesses a potent antimicrobial activity against bacteria, fungi and protozoa. Probably acts by disturbing membrane functions with its amphipathic structure. This Phyllomedusa burmeisteri (Brazilian common walking leaf frog) protein is Dermaseptin DS VIII-like peptide.